A 243-amino-acid polypeptide reads, in one-letter code: ATP synthase subunit a, chloroplastic (243 aa).

The next 5 helical transmembrane spans lie at 32–52, 96–116, 129–149, 195–215, and 216–236; these read GQVL…SFVG, TVFL…WALI, DINT…YAGI, LVVG…IMLL, and GCFT…AYIG.

This sequence belongs to the ATPase A chain family. F-type ATPases have 2 components, CF(1) - the catalytic core - and CF(0) - the membrane proton channel. CF(1) has five subunits: alpha(3), beta(3), gamma(1), delta(1), epsilon(1). CF(0) has four main subunits: a, b, b' and c.

It is found in the plastid. The protein localises to the chloroplast thylakoid membrane. Functionally, key component of the proton channel; it plays a direct role in the translocation of protons across the membrane. The protein is ATP synthase subunit a, chloroplastic of Tetradesmus obliquus (Green alga).